An 840-amino-acid chain; its full sequence is Lethal(3)malignant brain tumor-like protein 1 (840 aa).

S117 is subject to Phosphoserine. Residues 127–269 (EYEDGGAPAG…WSSSQPATGE (143 aa)) form a disordered region. The span at 156-165 (PNQDPPEDDS) shows a compositional bias: acidic residues. The span at 200–210 (VENSSGSTSAS) shows a compositional bias: polar residues. A compositionally biased stretch (basic and acidic residues) spans 236–247 (AMEKQEEGKDPE). Over residues 250 to 266 (PTASTPESEEWSSSQPA) the composition is skewed to polar residues. MBT repeat units lie at residues 274–374 (WSWE…LQPP), 382–481 (FSWS…LTPP), and 490–585 (FCWE…LQPP). An interaction with monomethylated and dimethylated peptides region spans residues 447–454 (FDNWDDTY). A disordered region spans residues 580–605 (HPLQPPLGPREPSSASPGGCPPLSYR). A CCHHC-type zinc finger spans residues 613 to 656 (SKYSFHHRKCPTPGCDGSGHVTGKFTAHHCLSGCPLAERNQSRL). Residues C622, C627, H640, and C646 each coordinate Zn(2+). The disordered stretch occupies residues 657-697 (KAELSDSEASARKKNLSGFSPRKKPRHHGRIGRPPKYRKIP). Basic residues predominate over residues 677-695 (PRKKPRHHGRIGRPPKYRK).

Homodimer. Interacts with RB1/RB (when monomethylated at 'Lys-860'). Interacts with p53/TP53 (when monomethylated at 'Lys-382'). Interacts with CBX3, ETV6, KMT5A and VCP/p97. Post-translationally, ubiquitinated in a VCP/p97-dependent way following DNA damage, leading to its removal from DNA damage sites, promoting accessibility of H4K20me2 mark for DNA repair protein TP53BP1, which is then recruited to DNA damage sites. In terms of tissue distribution, widely expressed. Expression is reduced in colorectal cancer cell line SW480 and promyelocytic leukemia cell line HL-60.

Its subcellular location is the nucleus. Functionally, polycomb group (PcG) protein that specifically recognizes and binds mono- and dimethyllysine residues on target proteins, thereby acting as a 'reader' of a network of post-translational modifications. PcG proteins maintain the transcriptionally repressive state of genes: acts as a chromatin compaction factor by recognizing and binding mono- and dimethylated histone H1b/H1-4 at 'Lys-26' (H1bK26me1 and H1bK26me2) and histone H4 at 'Lys-20' (H4K20me1 and H4K20me2), leading to condense chromatin and repress transcription. Recognizes and binds p53/TP53 monomethylated at 'Lys-382', leading to repress p53/TP53-target genes. Also recognizes and binds RB1/RB monomethylated at 'Lys-860'. Participates in the ETV6-mediated repression. Probably plays a role in cell proliferation. Overexpression induces multinucleated cells, suggesting that it is required to accomplish normal mitosis. This Homo sapiens (Human) protein is Lethal(3)malignant brain tumor-like protein 1 (L3MBTL1).